A 322-amino-acid chain; its full sequence is Methionyl-tRNA formyltransferase (322 aa).

112–115 contributes to the (6S)-5,6,7,8-tetrahydrofolate binding site; it reads SLLP.

The protein belongs to the Fmt family.

It carries out the reaction L-methionyl-tRNA(fMet) + (6R)-10-formyltetrahydrofolate = N-formyl-L-methionyl-tRNA(fMet) + (6S)-5,6,7,8-tetrahydrofolate + H(+). In terms of biological role, attaches a formyl group to the free amino group of methionyl-tRNA(fMet). The formyl group appears to play a dual role in the initiator identity of N-formylmethionyl-tRNA by promoting its recognition by IF2 and preventing the misappropriation of this tRNA by the elongation apparatus. The protein is Methionyl-tRNA formyltransferase of Synechococcus sp. (strain JA-2-3B'a(2-13)) (Cyanobacteria bacterium Yellowstone B-Prime).